A 355-amino-acid polypeptide reads, in one-letter code: Guanine nucleotide-binding protein alpha-2 subunit (355 aa).

The interval 1–20 (MCFGGRGKDDEAEASRSREL) is disordered. Positions 33–355 (KEVKLLLLGA…IQRNLKQLIL (323 aa)) constitute a G-alpha domain. The tract at residues 36–49 (KLLLLGAGESGKST) is G1 motif. GTP-binding residues include Glu-44, Ser-45, Gly-46, Lys-47, Ser-48, Thr-49, Asp-151, Leu-176, Thr-182, Gly-204, Asn-270, Lys-271, Asp-273, and Ala-328. Ser-48 lines the Mg(2+) pocket. The segment at 174–182 (DLLRSRLRT) is G2 motif. Residue Thr-182 coordinates Mg(2+). The interval 197 to 206 (YRMFDVGGQR) is G3 motif. The interval 266–273 (ILFLNKID) is G4 motif. The segment at 326-331 (TNATDT) is G5 motif.

The protein belongs to the G-alpha family. G(q) subfamily. In terms of assembly, g proteins are composed of 3 units; alpha, beta and gamma. The alpha chain contains the guanine nucleotide binding site. Mg(2+) is required as a cofactor.

Its function is as follows. Guanine nucleotide-binding proteins (G proteins) are involved as modulators or transducers in various transmembrane signaling systems. In Neurospora crassa (strain ATCC 24698 / 74-OR23-1A / CBS 708.71 / DSM 1257 / FGSC 987), this protein is Guanine nucleotide-binding protein alpha-2 subunit (gna-2).